The sequence spans 450 residues: Zinc finger protein 277 (450 aa).

Alanine 2 is subject to N-acetylalanine. 2 C2H2-type zinc fingers span residues 224–248 and 355–381; these read LQCL…KKQH and HQCR…ETKH.

The protein belongs to the ZNF277 family. In terms of assembly, interacts (via zinc-finger domains) with RPS2/40S ribosomal protein S2, perhaps as nascent RPS2 is synthesized during translation; the interaction is direct; the interaction is extra-ribosomal. Interaction with RPS2 competes with the binding of RPS2 to protein arginine methyltransferase PRMT3. Interacts with Polycomb group (PcG) complex protein BMI1. May be part of a complex including at least ZNF277, BMI1 and RNF2/RING2.

Its subcellular location is the nucleus. Its function is as follows. Probable transcription factor. Involved in modulation of cellular senescence; represses transcription of the tumor suppressor gene INK4A/ARF, perhaps acting via the Polycomb group (PcG) complex PRC1. The sequence is that of Zinc finger protein 277 (ZNF277) from Homo sapiens (Human).